A 275-amino-acid polypeptide reads, in one-letter code: Elongation factor Ts (275 aa).

An Isoglutamyl lysine isopeptide (Lys-Gln) (interchain with Q-Cter in protein Pup) cross-link involves residue lysine 36. The involved in Mg(2+) ion dislocation from EF-Tu stretch occupies residues 76 to 79; sequence TDFV.

The protein belongs to the EF-Ts family.

Its subcellular location is the cytoplasm. Associates with the EF-Tu.GDP complex and induces the exchange of GDP to GTP. It remains bound to the aminoacyl-tRNA.EF-Tu.GTP complex up to the GTP hydrolysis stage on the ribosome. This chain is Elongation factor Ts, found in Mycolicibacterium smegmatis (strain ATCC 700084 / mc(2)155) (Mycobacterium smegmatis).